Here is a 254-residue protein sequence, read N- to C-terminus: Alcohol dehydrogenase 1 (254 aa).

10 to 33 serves as a coordination point for NAD(+); it reads FVAGLGGIGFDTSREIVKKGPKNL. Substrate is bound at residue serine 138. Residue tyrosine 151 is the Proton acceptor of the active site.

The protein belongs to the short-chain dehydrogenases/reductases (SDR) family. Homodimer.

It catalyses the reaction a primary alcohol + NAD(+) = an aldehyde + NADH + H(+). The catalysed reaction is a secondary alcohol + NAD(+) = a ketone + NADH + H(+). This chain is Alcohol dehydrogenase 1 (Adh1), found in Drosophila mojavensis (Fruit fly).